Reading from the N-terminus, the 246-residue chain is Short chain dehydrogenase/reductase dmxR12 (246 aa).

4 residues coordinate NADP(+): isoleucine 15, serine 34, lysine 125, and lysine 164. Catalysis depends on lysine 164, which acts as the Lowers pKa of active site Tyr.

The protein belongs to the short-chain dehydrogenases/reductases (SDR) family.

Its pathway is secondary metabolite biosynthesis. Its function is as follows. Short chain dehydrogenase/reductase; part of the gene cluster that mediates the biosynthesis of the dimeric xanthones cryptosporioptides. The pathway begins with the synthesis of atrochrysone thioester by the polyketide synthase dmx-nrPKS. The atrochrysone carboxyl ACP thioesterase dmxR1 then breaks the thioester bond and releases the atrochrysone carboxylic acid from dmx-nrPKS. Atrochrysone carboxylic acid is decarboxylated by the decarboxylase dmxR15, and oxidized by the anthrone oxygenase dmxR16 to yield emodin. Emodin is then reduced to emodin hydroquinone by the oxidoreductase dmxR7. A-ring reduction by the short chain dehydrogenase dmxR18, dehydration by the scytalone dehydratase-like protein dmxR17 and probable spontaneous re-oxidation, results in overall deoxygenation to chrysophanol. Baeyer-Villiger oxidation by the Baeyer-Villiger monooxygenase (BVMO) dmxR6 then yields monodictylactone in equilibrium with monodictyphenone. In the case of the cryptosporioptides biosynthesis, monodictylactone is reduced at C-12 to an alcohol (by the short chain dehydrogenases dmxR12 or dmxR8) and hydroxylated at C-5 by dmxR9, yielding the electron-rich aromatic which could eliminate H(2)O to form the ortho-quinonemethide, followed by tautomerisation to paraquinone and complete the formal reduction to produce the 10-methylgroup. Conjugate addition of C-4a-OH to the resulting paraquinone by the monooxygenase dmxR10 then gives cyclohexadienone, which is then reduced at C-5 by the short chain dehydrogenase dmxR3 to give the dihydroxanthone. The 6,7-epoxide in the cryptosporioptides could be introduced by the cytochrome P450 monooxygenase dmxL3. The highly reducing PKS dmxL2 manufactures butyrate, which is further carboxylated by dmxL1 to form ethylmalonate. It is not yet clear whether the carboxylation occurs while the butyrate is attached to the ACP of dmxL2, but this unusual fungal metabolite could then be esterified to O-5 by the O-acetyltransferase dmxR13. Finally, dimerization performed by dmxR5 gives the observed dimers cryptosporioptides A, B and C as the final products of the pathway. The chain is Short chain dehydrogenase/reductase dmxR12 from Cryptosporiopsis sp. (strain 8999).